The following is a 69-amino-acid chain: Mu-conotoxin-like Am3.3 (69 aa).

The first 20 residues, 1-20, serve as a signal peptide directing secretion; sequence MMSKLGVLLTICLLLFPLTA. Residues 21 to 52 constitute a propeptide that is removed on maturation; sequence VPLDGDQPADRPAERMQDDISSENHPMFDAIR. Cysteine amide is present on C68.

It belongs to the conotoxin M family. Post-translationally, is not hydroxylated. In terms of processing, contains 3 disulfide bonds. As to expression, expressed by the venom duct.

Its subcellular location is the secreted. Functionally, mu-conotoxins block voltage-gated sodium channels (Nav). The sequence is that of Mu-conotoxin-like Am3.3 from Conus amadis (Amadis cone).